A 270-amino-acid chain; its full sequence is 4-hydroxy-tetrahydrodipicolinate reductase (270 aa).

NAD(+)-binding positions include 9–14 and glutamate 35; that span reads GAGGRM. Arginine 36 is an NADP(+) binding site. NAD(+) is bound by residues 99–101 and 123–126; these read GTT and ASNY. Histidine 156 (proton donor/acceptor) is an active-site residue. Residue histidine 157 participates in (S)-2,3,4,5-tetrahydrodipicolinate binding. The Proton donor role is filled by lysine 160. A (S)-2,3,4,5-tetrahydrodipicolinate-binding site is contributed by 166-167; it reads GT.

The protein belongs to the DapB family.

The protein resides in the cytoplasm. It catalyses the reaction (S)-2,3,4,5-tetrahydrodipicolinate + NAD(+) + H2O = (2S,4S)-4-hydroxy-2,3,4,5-tetrahydrodipicolinate + NADH + H(+). The enzyme catalyses (S)-2,3,4,5-tetrahydrodipicolinate + NADP(+) + H2O = (2S,4S)-4-hydroxy-2,3,4,5-tetrahydrodipicolinate + NADPH + H(+). It participates in amino-acid biosynthesis; L-lysine biosynthesis via DAP pathway; (S)-tetrahydrodipicolinate from L-aspartate: step 4/4. Its function is as follows. Catalyzes the conversion of 4-hydroxy-tetrahydrodipicolinate (HTPA) to tetrahydrodipicolinate. The protein is 4-hydroxy-tetrahydrodipicolinate reductase of Actinobacillus succinogenes (strain ATCC 55618 / DSM 22257 / CCUG 43843 / 130Z).